A 292-amino-acid polypeptide reads, in one-letter code: Ribosomal RNA small subunit methyltransferase I (292 aa).

The protein belongs to the methyltransferase superfamily. RsmI family.

It is found in the cytoplasm. The catalysed reaction is cytidine(1402) in 16S rRNA + S-adenosyl-L-methionine = 2'-O-methylcytidine(1402) in 16S rRNA + S-adenosyl-L-homocysteine + H(+). Its function is as follows. Catalyzes the 2'-O-methylation of the ribose of cytidine 1402 (C1402) in 16S rRNA. In Bacillus subtilis (strain 168), this protein is Ribosomal RNA small subunit methyltransferase I.